A 155-amino-acid polypeptide reads, in one-letter code: 6,7-dimethyl-8-ribityllumazine synthase (155 aa).

5-amino-6-(D-ribitylamino)uracil is bound by residues Phe24, 58–60 (AFE), and 82–84 (VII). 87–88 (ST) is a binding site for (2S)-2-hydroxy-3-oxobutyl phosphate. The Proton donor role is filled by His90. A 5-amino-6-(D-ribitylamino)uracil-binding site is contributed by Phe115. A (2S)-2-hydroxy-3-oxobutyl phosphate-binding site is contributed by Arg129.

The protein belongs to the DMRL synthase family.

It carries out the reaction (2S)-2-hydroxy-3-oxobutyl phosphate + 5-amino-6-(D-ribitylamino)uracil = 6,7-dimethyl-8-(1-D-ribityl)lumazine + phosphate + 2 H2O + H(+). The protein operates within cofactor biosynthesis; riboflavin biosynthesis; riboflavin from 2-hydroxy-3-oxobutyl phosphate and 5-amino-6-(D-ribitylamino)uracil: step 1/2. Catalyzes the formation of 6,7-dimethyl-8-ribityllumazine by condensation of 5-amino-6-(D-ribitylamino)uracil with 3,4-dihydroxy-2-butanone 4-phosphate. This is the penultimate step in the biosynthesis of riboflavin. The protein is 6,7-dimethyl-8-ribityllumazine synthase of Chlorobium phaeobacteroides (strain DSM 266 / SMG 266 / 2430).